Consider the following 454-residue polypeptide: Bifunctional protein GlmU (454 aa).

The pyrophosphorylase stretch occupies residues 1–231 (MDRATVSLIV…EAETLGVNTR (231 aa)). UDP-N-acetyl-alpha-D-glucosamine contacts are provided by residues 11–14 (LAAG), K25, Q78, 83–84 (GT), 106–108 (YGD), G143, E157, N172, and N229. D108 is a binding site for Mg(2+). N229 serves as a coordination point for Mg(2+). The interval 232–252 (AQLAEAEAEFQKRARAAALED) is linker. Residues 253 to 454 (GVTLTAPDTV…AKAAKKKEAP (202 aa)) form an N-acetyltransferase region. Positions 318 and 336 each coordinate UDP-N-acetyl-alpha-D-glucosamine. Catalysis depends on H348, which acts as the Proton acceptor. Residues Y351 and N362 each contribute to the UDP-N-acetyl-alpha-D-glucosamine site. Acetyl-CoA is bound by residues A365, 371-372 (NY), S390, S408, and R425.

This sequence in the N-terminal section; belongs to the N-acetylglucosamine-1-phosphate uridyltransferase family. In the C-terminal section; belongs to the transferase hexapeptide repeat family. Homotrimer. Mg(2+) is required as a cofactor.

Its subcellular location is the cytoplasm. The enzyme catalyses alpha-D-glucosamine 1-phosphate + acetyl-CoA = N-acetyl-alpha-D-glucosamine 1-phosphate + CoA + H(+). The catalysed reaction is N-acetyl-alpha-D-glucosamine 1-phosphate + UTP + H(+) = UDP-N-acetyl-alpha-D-glucosamine + diphosphate. It functions in the pathway nucleotide-sugar biosynthesis; UDP-N-acetyl-alpha-D-glucosamine biosynthesis; N-acetyl-alpha-D-glucosamine 1-phosphate from alpha-D-glucosamine 6-phosphate (route II): step 2/2. It participates in nucleotide-sugar biosynthesis; UDP-N-acetyl-alpha-D-glucosamine biosynthesis; UDP-N-acetyl-alpha-D-glucosamine from N-acetyl-alpha-D-glucosamine 1-phosphate: step 1/1. Its pathway is bacterial outer membrane biogenesis; LPS lipid A biosynthesis. Functionally, catalyzes the last two sequential reactions in the de novo biosynthetic pathway for UDP-N-acetylglucosamine (UDP-GlcNAc). The C-terminal domain catalyzes the transfer of acetyl group from acetyl coenzyme A to glucosamine-1-phosphate (GlcN-1-P) to produce N-acetylglucosamine-1-phosphate (GlcNAc-1-P), which is converted into UDP-GlcNAc by the transfer of uridine 5-monophosphate (from uridine 5-triphosphate), a reaction catalyzed by the N-terminal domain. In Cereibacter sphaeroides (strain ATCC 17023 / DSM 158 / JCM 6121 / CCUG 31486 / LMG 2827 / NBRC 12203 / NCIMB 8253 / ATH 2.4.1.) (Rhodobacter sphaeroides), this protein is Bifunctional protein GlmU.